The chain runs to 323 residues: Probable cell division protein WhiA (323 aa).

The H-T-H motif DNA-binding region spans 279–313 (TLKELGEMVSGGKISKSGINHRLRKLDEIAERLRA).

The protein belongs to the WhiA family.

Functionally, involved in cell division and chromosome segregation. The protein is Probable cell division protein WhiA of Anoxybacillus flavithermus (strain DSM 21510 / WK1).